The chain runs to 418 residues: Glutamyl-tRNA reductase (418 aa).

Residues Thr-49–Arg-52, Ser-109, Glu-114–Gln-116, and Gln-120 each bind substrate. Residue Cys-50 is the Nucleophile of the active site. Residue Gly-189–Ile-194 participates in NADP(+) binding.

This sequence belongs to the glutamyl-tRNA reductase family. In terms of assembly, homodimer.

It catalyses the reaction (S)-4-amino-5-oxopentanoate + tRNA(Glu) + NADP(+) = L-glutamyl-tRNA(Glu) + NADPH + H(+). It participates in porphyrin-containing compound metabolism; protoporphyrin-IX biosynthesis; 5-aminolevulinate from L-glutamyl-tRNA(Glu): step 1/2. Functionally, catalyzes the NADPH-dependent reduction of glutamyl-tRNA(Glu) to glutamate 1-semialdehyde (GSA). The polypeptide is Glutamyl-tRNA reductase (Salmonella heidelberg (strain SL476)).